The sequence spans 347 residues: Palmitoyltransferase ZDHHC11 (347 aa).

Residues methionine 1–alanine 46 lie on the Cytoplasmic side of the membrane. A helical membrane pass occupies residues isoleucine 47–leucine 67. Topologically, residues proline 68 to alanine 75 are lumenal. A helical transmembrane segment spans residues asparagine 76–isoleucine 96. The Cytoplasmic portion of the chain corresponds to aspartate 97–tyrosine 170. The region spanning glutamine 128 to alanine 178 is the DHHC domain. Cysteine 158 serves as the catalytic S-palmitoyl cysteine intermediate. Residues tryptophan 171 to leucine 191 form a helical membrane-spanning segment. Over cysteine 192–proline 234 the chain is Lumenal. A helical membrane pass occupies residues isoleucine 235–glycine 255. At histidine 256–aspartate 347 the chain is on the cytoplasmic side. Residues glutamate 291 to aspartate 306 are compositionally biased toward basic and acidic residues. Positions glutamate 291–serine 332 are disordered. Over residues phenylalanine 322–serine 331 the composition is skewed to polar residues.

It belongs to the DHHC palmitoyltransferase family. In terms of assembly, interacts with IRF3 and STING1; in presence of DNA viruses recruits IRF3 to STING1 promoting IRF3 phosphorylation and activation.

The protein localises to the endosome membrane. The catalysed reaction is L-cysteinyl-[protein] + hexadecanoyl-CoA = S-hexadecanoyl-L-cysteinyl-[protein] + CoA. Its function is as follows. Endoplasmic reticulum-localized palmitoyltransferase that could catalyze the addition of palmitate onto various protein substrates and be involved in a variety of cellular processes. Has a palmitoyltransferase activity toward NCDN and regulates NCDN association with endosome membranes through this palmitoylation. May play a role in cell proliferation. Functionally, also has a palmitoyltransferase activity-independent function in DNA virus-triggered and CGAS-mediated innate immune response. Functions as an adapter that recruits IRF3 to STING1 to promote the activation of that key transcriptional regulator of type I interferon (IFN)-dependent immune response. The protein is Palmitoyltransferase ZDHHC11 of Mus musculus (Mouse).